We begin with the raw amino-acid sequence, 413 residues long: Putative tRNA pseudouridine synthase C16C4.06c (413 aa).

D96 serves as the catalytic Nucleophile. Y154 is a binding site for substrate.

Belongs to the tRNA pseudouridine synthase TruA family.

It is found in the cytoplasm. Its subcellular location is the nucleus. The enzyme catalyses a uridine in tRNA = a pseudouridine in tRNA. The sequence is that of Putative tRNA pseudouridine synthase C16C4.06c from Schizosaccharomyces pombe (strain 972 / ATCC 24843) (Fission yeast).